Consider the following 508-residue polypeptide: Hydroxymethylglutaryl-CoA synthase, mitochondrial (508 aa).

The N-terminal 37 residues, 1–37, are a transit peptide targeting the mitochondrion; that stretch reads MQRLLTPVKRILQLTRAVQETSLTPARLLPVAHQRFS. An N6-succinyllysine modification is found at K52. Residues E80 and A81 each contribute to the (3S)-3-hydroxy-3-methylglutaryl-CoA site. An N6-acetyllysine; alternate modification is found at K83. The residue at position 83 (K83) is an N6-succinyllysine; alternate. The active-site Proton donor/acceptor is E132. C166, N204, and T208 together coordinate (3S)-3-hydroxy-3-methylglutaryl-CoA. Catalysis depends on C166, which acts as the Acyl-thioester intermediate. N6-succinyllysine is present on K221. K243 carries the N6-acetyllysine modification. K256 bears the N6-acetyllysine; alternate mark. K256 bears the N6-succinyllysine; alternate mark. (3S)-3-hydroxy-3-methylglutaryl-CoA contacts are provided by S258 and H301. H301 acts as the Proton donor/acceptor in catalysis. K306 is subject to N6-acetyllysine. K310 contacts (3S)-3-hydroxy-3-methylglutaryl-CoA. At K310 the chain carries N6-acetyllysine; alternate. K310 is subject to N6-succinyllysine; alternate. K333 is subject to N6-succinyllysine. N6-acetyllysine; alternate is present on residues K342, K350, K354, and K358. N6-succinyllysine; alternate is present on residues K342, K350, K354, and K358. Residues N380 and S414 each coordinate (3S)-3-hydroxy-3-methylglutaryl-CoA. Residue S433 is modified to Phosphoserine. K437 carries the post-translational modification N6-acetyllysine. S440 is subject to Phosphoserine. K447 is modified (N6-acetyllysine; alternate). An N6-succinyllysine; alternate modification is found at K447. S456 is subject to Phosphoserine. K473 carries the post-translational modification N6-acetyllysine; alternate. K473 bears the N6-succinyllysine; alternate mark. S477 is modified (phosphoserine).

It belongs to the thiolase-like superfamily. HMG-CoA synthase family. In terms of assembly, homodimer. Succinylated. Desuccinylated by SIRT5. Succinylation, at least at Lys-83 and Lys-310, inhibits the enzymatic activity. In terms of tissue distribution, expression in liver is 200-fold higher than in any other tissue. Low expression in colon, kidney, testis, and pancreas. Very low expression in heart and skeletal muscle. Not detected in brain. Highest expression detected in heart and skeletal muscle.

It is found in the mitochondrion. It carries out the reaction acetoacetyl-CoA + acetyl-CoA + H2O = (3S)-3-hydroxy-3-methylglutaryl-CoA + CoA + H(+). The protein operates within metabolic intermediate biosynthesis; (R)-mevalonate biosynthesis; (R)-mevalonate from acetyl-CoA: step 2/3. Catalyzes the first irreversible step in ketogenesis, condensing acetyl-CoA to acetoacetyl-CoA to form HMG-CoA, which is converted by HMG-CoA reductase (HMGCR) into mevalonate. This Homo sapiens (Human) protein is Hydroxymethylglutaryl-CoA synthase, mitochondrial (HMGCS2).